The sequence spans 255 residues: Imidazole glycerol phosphate synthase subunit HisF (255 aa).

Active-site residues include D11 and D130.

The protein belongs to the HisA/HisF family. As to quaternary structure, heterodimer of HisH and HisF.

Its subcellular location is the cytoplasm. The enzyme catalyses 5-[(5-phospho-1-deoxy-D-ribulos-1-ylimino)methylamino]-1-(5-phospho-beta-D-ribosyl)imidazole-4-carboxamide + L-glutamine = D-erythro-1-(imidazol-4-yl)glycerol 3-phosphate + 5-amino-1-(5-phospho-beta-D-ribosyl)imidazole-4-carboxamide + L-glutamate + H(+). It participates in amino-acid biosynthesis; L-histidine biosynthesis; L-histidine from 5-phospho-alpha-D-ribose 1-diphosphate: step 5/9. In terms of biological role, IGPS catalyzes the conversion of PRFAR and glutamine to IGP, AICAR and glutamate. The HisF subunit catalyzes the cyclization activity that produces IGP and AICAR from PRFAR using the ammonia provided by the HisH subunit. The chain is Imidazole glycerol phosphate synthase subunit HisF from Campylobacter jejuni (strain RM1221).